Consider the following 347-residue polypeptide: NADH-ubiquinone oxidoreductase chain 2 (347 aa).

11 helical membrane-spanning segments follow: residues 3–23 (PIIFIIILMTVMLGTTIVMIS), 25–45 (HWLRIWIGFEMNMLAIIPIMM), 66–86 (ASMLLMMAIIINLMFSGQWTV), 96–116 (MLMTMALAMKLGMAPFHFWVP), 122–142 (IPLSSGLILLTWQKLVPMSVL), 145–165 (ILPSINLDLILTLSILSIMIG), 178–198 (IMAYSSIAHMGWMTAILPYNP), 200–220 (MMLLNLIIYITMTSTMFLLFM), 237–257 (MPIMTTLVLITLLSMGGLPPL), 274–294 (NSIILPTLMAITALLNLYFYM), and 325–345 (LLPTLTVLSTMLLPLTPILSI).

This sequence belongs to the complex I subunit 2 family. Core subunit of respiratory chain NADH dehydrogenase (Complex I) which is composed of 45 different subunits. Interacts with TMEM242.

The protein resides in the mitochondrion inner membrane. It catalyses the reaction a ubiquinone + NADH + 5 H(+)(in) = a ubiquinol + NAD(+) + 4 H(+)(out). In terms of biological role, core subunit of the mitochondrial membrane respiratory chain NADH dehydrogenase (Complex I) which catalyzes electron transfer from NADH through the respiratory chain, using ubiquinone as an electron acceptor. Essential for the catalytic activity and assembly of complex I. The protein is NADH-ubiquinone oxidoreductase chain 2 of Capra hircus (Goat).